A 135-amino-acid polypeptide reads, in one-letter code: Phosphoribosyl-AMP cyclohydrolase (135 aa).

D89 is a binding site for Mg(2+). C90 provides a ligand contact to Zn(2+). D91 and D93 together coordinate Mg(2+). Zn(2+) is bound by residues C106 and C113.

This sequence belongs to the PRA-CH family. As to quaternary structure, homodimer. It depends on Mg(2+) as a cofactor. The cofactor is Zn(2+).

Its subcellular location is the cytoplasm. The enzyme catalyses 1-(5-phospho-beta-D-ribosyl)-5'-AMP + H2O = 1-(5-phospho-beta-D-ribosyl)-5-[(5-phospho-beta-D-ribosylamino)methylideneamino]imidazole-4-carboxamide. Its pathway is amino-acid biosynthesis; L-histidine biosynthesis; L-histidine from 5-phospho-alpha-D-ribose 1-diphosphate: step 3/9. Its function is as follows. Catalyzes the hydrolysis of the adenine ring of phosphoribosyl-AMP. The protein is Phosphoribosyl-AMP cyclohydrolase of Bifidobacterium adolescentis (strain ATCC 15703 / DSM 20083 / NCTC 11814 / E194a).